The sequence spans 428 residues: Flotillin-2 (428 aa).

Residue Gly2 is the site of N-myristoyl glycine attachment. A lipid anchor (S-palmitoyl cysteine; by ZDHHC5) is attached at Cys4. A lipid anchor (S-palmitoyl cysteine) is attached at Cys19. The S-palmitoyl cysteine; by ZDHHC5 moiety is linked to residue Cys20. A Phosphoserine modification is found at Ser405.

This sequence belongs to the band 7/mec-2 family. Flotillin subfamily. In terms of assembly, heterooligomeric complex of flotillin-1 and flotillin-2 and caveolin-1 and caveolin-2. Interacts with ECPAS. Post-translationally, ZDHHC5-catalyzed palmitoylation may be required for the formation of higher-order complexes and for neurite outgrowth in cultured neural stem cells.

It is found in the cell membrane. Its subcellular location is the membrane. The protein resides in the caveola. It localises to the endosome. Functionally, may act as a scaffolding protein within caveolar membranes, functionally participating in formation of caveolae or caveolae-like vesicles. May be involved in epidermal cell adhesion and epidermal structure and function. The sequence is that of Flotillin-2 (FLOT2) from Bos taurus (Bovine).